The following is a 252-amino-acid chain: Vacuolar iron transporter 1 (252 aa).

The Cytoplasmic segment spans residues 1 to 38 (MAAATDGGGLPLLADKAASHSHHHHPERHFTSGEVVRD). A helical transmembrane segment spans residues 39 to 59 (VIMGVSDGLTVPFALAAGLSG). Residues 60–65 (ASAPSS) lie on the Vacuolar side of the membrane. The chain crosses the membrane as a helical span at residues 66–86 (LVLTAGLAEVAAGAISMGLGG). The Cytoplasmic segment spans residues 87–170 (YLAAKSEADH…PDPKRAIQSA (84 aa)). The cytoplasmic metal binding domain (MBD) stretch occupies residues 92 to 167 (SEADHYQREM…LEKPDPKRAI (76 aa)). Fe cation is bound by residues Glu104, Glu107, Glu115, Glu118, Met151, and Glu155. Residues 171 to 191 (LTIALSYVIGGLVPLLPYMFI) traverse the membrane as a helical segment. Over 192 to 196 (STAQN) the chain is Vacuolar. The helical transmembrane segment at 197–217 (AMLTSVGVTLVALLFFGYIKG) threads the bilayer. The Cytoplasmic portion of the chain corresponds to 218 to 224 (RFTGNRP). The chain crosses the membrane as a helical span at residues 225-245 (FLSAVQTAIIGALASAAAYGM). The Vacuolar portion of the chain corresponds to 246-252 (AKAVQTR).

Belongs to the CCC1 family. In terms of assembly, homodimer. The dimeric interaction is mediated by both the transmembrane domains (TMDs) and the cytoplasmic metal binding domain (MBD). In terms of tissue distribution, highly expressed in leaf blades. Expressed in leaf sheaths.

The protein resides in the vacuole membrane. It carries out the reaction Fe(2+)(in) = Fe(2+)(out). In terms of biological role, vacuolar iron transporter involved in the transfer of iron ions from the cytosol to the vacuole for intracellular iron storage. Vacuolar iron storage is required for seed embryo and seedling development. May be involved in the regulation of iron translocation between flag leaves and seeds. Can transport zinc ions from the cytosol to the vacuole. This Oryza sativa subsp. japonica (Rice) protein is Vacuolar iron transporter 1.